The chain runs to 375 residues: L-asparaginase 2 (375 aa).

An N-terminal signal peptide occupies residues 1–19 (MKKQRMLVLFTALLFVFTG). The segment at 22 to 46 (HSPETKESPKEKAQTQKVSSASASE) is disordered. Residues 24 to 35 (PETKESPKEKAQ) show a composition bias toward basic and acidic residues. The 325-residue stretch at 51-375 (PNIRILATGG…QKIQAYFNEY (325 aa)) folds into the Asparaginase/glutaminase domain. The O-isoaspartyl threonine intermediate role is filled by T61. Substrate contacts are provided by residues S108 and 141-142 (TD).

The protein belongs to the asparaginase 1 family. In terms of assembly, homotetramer.

The enzyme catalyses L-asparagine + H2O = L-aspartate + NH4(+). In terms of biological role, catalyzes the conversion of L-asparagine to L-aspartate and ammonium. The chain is L-asparaginase 2 (ansZ) from Bacillus subtilis (strain 168).